The chain runs to 220 residues: MKLNKYIDHTILKPETTQEQVEKILAEAKEYDFASVCVNPTWVALAAESLKDSDVKVCTVIGFPLGANTPAVKAFETKDAISNGADEIDVVINIGALKTGNYDLVLEDIKAVVAASGDKLVKVIIEACLLTDDEKVKGCQLSQEAGADYVKTSTGFSTGGATVADVALMRKTVGPDMGVKASGGARSYEDAIAFIEAGASRIGASSGVAIMNGAQADGDY.

D89 acts as the Proton donor/acceptor in catalysis. The active-site Schiff-base intermediate with acetaldehyde is K151. Residue K180 is the Proton donor/acceptor of the active site.

Belongs to the DeoC/FbaB aldolase family. DeoC type 1 subfamily.

It is found in the cytoplasm. The catalysed reaction is 2-deoxy-D-ribose 5-phosphate = D-glyceraldehyde 3-phosphate + acetaldehyde. The protein operates within carbohydrate degradation; 2-deoxy-D-ribose 1-phosphate degradation; D-glyceraldehyde 3-phosphate and acetaldehyde from 2-deoxy-alpha-D-ribose 1-phosphate: step 2/2. In terms of biological role, catalyzes a reversible aldol reaction between acetaldehyde and D-glyceraldehyde 3-phosphate to generate 2-deoxy-D-ribose 5-phosphate. This Streptococcus suis (strain 05ZYH33) protein is Deoxyribose-phosphate aldolase.